The following is a 437-amino-acid chain: 3-ketoacyl-CoA thiolase (437 aa).

Cysteine 99 (acyl-thioester intermediate) is an active-site residue. Catalysis depends on proton acceptor residues histidine 392 and cysteine 422.

Belongs to the thiolase-like superfamily. Thiolase family. Heterotetramer of two alpha chains (FadJ) and two beta chains (FadI).

The protein resides in the cytoplasm. The enzyme catalyses an acyl-CoA + acetyl-CoA = a 3-oxoacyl-CoA + CoA. Its pathway is lipid metabolism; fatty acid beta-oxidation. Catalyzes the final step of fatty acid oxidation in which acetyl-CoA is released and the CoA ester of a fatty acid two carbons shorter is formed. This chain is 3-ketoacyl-CoA thiolase, found in Erwinia tasmaniensis (strain DSM 17950 / CFBP 7177 / CIP 109463 / NCPPB 4357 / Et1/99).